The chain runs to 82 residues: Small ribosomal subunit protein bS16 (82 aa).

This sequence belongs to the bacterial ribosomal protein bS16 family.

This Glaesserella parasuis serovar 5 (strain SH0165) (Haemophilus parasuis) protein is Small ribosomal subunit protein bS16.